An 88-amino-acid polypeptide reads, in one-letter code: Small ribosomal subunit protein bS16 (88 aa).

The protein belongs to the bacterial ribosomal protein bS16 family.

This is Small ribosomal subunit protein bS16 from Sorangium cellulosum (strain So ce56) (Polyangium cellulosum (strain So ce56)).